A 158-amino-acid polypeptide reads, in one-letter code: Small ribosomal subunit protein uS7 (158 aa).

It belongs to the universal ribosomal protein uS7 family. Part of the 30S ribosomal subunit. Contacts proteins S9 and S11.

One of the primary rRNA binding proteins, it binds directly to 16S rRNA where it nucleates assembly of the head domain of the 30S subunit. Is located at the subunit interface close to the decoding center, probably blocks exit of the E-site tRNA. This Gluconacetobacter diazotrophicus (strain ATCC 49037 / DSM 5601 / CCUG 37298 / CIP 103539 / LMG 7603 / PAl5) protein is Small ribosomal subunit protein uS7.